The following is a 305-amino-acid chain: Ribosomal protein L11 methyltransferase (305 aa).

S-adenosyl-L-methionine-binding residues include T155, G176, D198, and N241.

It belongs to the methyltransferase superfamily. PrmA family.

It is found in the cytoplasm. It carries out the reaction L-lysyl-[protein] + 3 S-adenosyl-L-methionine = N(6),N(6),N(6)-trimethyl-L-lysyl-[protein] + 3 S-adenosyl-L-homocysteine + 3 H(+). Its function is as follows. Methylates ribosomal protein L11. The sequence is that of Ribosomal protein L11 methyltransferase from Carboxydothermus hydrogenoformans (strain ATCC BAA-161 / DSM 6008 / Z-2901).